Consider the following 487-residue polypeptide: Glutamyl-tRNA(Gln) amidotransferase subunit A (487 aa).

Residues Lys-74 and Ser-149 each act as charge relay system in the active site. Ser-173 functions as the Acyl-ester intermediate in the catalytic mechanism.

This sequence belongs to the amidase family. GatA subfamily. Heterotrimer of A, B and C subunits.

It carries out the reaction L-glutamyl-tRNA(Gln) + L-glutamine + ATP + H2O = L-glutaminyl-tRNA(Gln) + L-glutamate + ADP + phosphate + H(+). In terms of biological role, allows the formation of correctly charged Gln-tRNA(Gln) through the transamidation of misacylated Glu-tRNA(Gln) in organisms which lack glutaminyl-tRNA synthetase. The reaction takes place in the presence of glutamine and ATP through an activated gamma-phospho-Glu-tRNA(Gln). This Synechococcus sp. (strain CC9311) protein is Glutamyl-tRNA(Gln) amidotransferase subunit A.